Consider the following 388-residue polypeptide: Probable acetyl-CoA acetyltransferase (388 aa).

Cys-84 acts as the Acyl-thioester intermediate in catalysis. Lys-187 is covalently cross-linked (Isoglutamyl lysine isopeptide (Lys-Gln) (interchain with Q-Cter in protein Pup)). Residues His-345 and Cys-375 each act as proton acceptor in the active site.

It belongs to the thiolase-like superfamily. Thiolase family.

The enzyme catalyses 2 acetyl-CoA = acetoacetyl-CoA + CoA. The polypeptide is Probable acetyl-CoA acetyltransferase (Mycolicibacterium smegmatis (strain ATCC 700084 / mc(2)155) (Mycobacterium smegmatis)).